A 44-amino-acid polypeptide reads, in one-letter code: uncharacterized protein (44 aa).

Residues 22-44 (LNSAPAFKSSQNTSTQAKPTFSN) are disordered.

This is an uncharacterized protein from Dictyostelium discoideum (Social amoeba).